The chain runs to 336 residues: ATP-dependent 6-phosphofructokinase 3 (336 aa).

Residues Gly-10, 72-73 (RE), and 108-111 (GNGT) contribute to the ATP site. Asn-109 contributes to the Mg(2+) binding site. Substrate contacts are provided by residues 131–133 (TID), Arg-168, 175–177 (MGH), Glu-228, Arg-255, and 261–264 (YIQR). The Proton acceptor role is filled by Asp-133.

Belongs to the phosphofructokinase type A (PFKA) family. Mixed-substrate PFK group III subfamily. In terms of assembly, homodimer or homotetramer. It depends on Mg(2+) as a cofactor.

It is found in the cytoplasm. The catalysed reaction is beta-D-fructose 6-phosphate + ATP = beta-D-fructose 1,6-bisphosphate + ADP + H(+). It functions in the pathway carbohydrate degradation; glycolysis; D-glyceraldehyde 3-phosphate and glycerone phosphate from D-glucose: step 3/4. Its function is as follows. Catalyzes the phosphorylation of D-fructose 6-phosphate to fructose 1,6-bisphosphate by ATP, the first committing step of glycolysis. The protein is ATP-dependent 6-phosphofructokinase 3 of Bacteroides thetaiotaomicron (strain ATCC 29148 / DSM 2079 / JCM 5827 / CCUG 10774 / NCTC 10582 / VPI-5482 / E50).